The sequence spans 123 residues: uncharacterized protein (123 aa).

The chain crosses the membrane as a helical span at residues 5-25; it reads GTLVIIFAIVLILCIMLLFFY. Residues 32 to 53 form a disordered region; sequence KPSVLPPPIPPPTPPPSKKKYD. Over residues 35-47 the composition is skewed to pro residues; sequence VLPPPIPPPTPPP.

Belongs to the asfivirus CP123L family.

It localises to the host membrane. Its subcellular location is the virion. This is an uncharacterized protein from Ornithodoros (relapsing fever ticks).